A 195-amino-acid chain; its full sequence is Protein GrpE (195 aa).

The protein belongs to the GrpE family. As to quaternary structure, homodimer.

It localises to the cytoplasm. Its function is as follows. Participates actively in the response to hyperosmotic and heat shock by preventing the aggregation of stress-denatured proteins, in association with DnaK and GrpE. It is the nucleotide exchange factor for DnaK and may function as a thermosensor. Unfolded proteins bind initially to DnaJ; upon interaction with the DnaJ-bound protein, DnaK hydrolyzes its bound ATP, resulting in the formation of a stable complex. GrpE releases ADP from DnaK; ATP binding to DnaK triggers the release of the substrate protein, thus completing the reaction cycle. Several rounds of ATP-dependent interactions between DnaJ, DnaK and GrpE are required for fully efficient folding. In Francisella tularensis subsp. tularensis (strain FSC 198), this protein is Protein GrpE.